The primary structure comprises 86 residues: uncharacterized protein (86 aa).

This is an uncharacterized protein from Beak and feather disease virus (BFDV).